The sequence spans 159 residues: uncharacterized protein (159 aa).

It localises to the mitochondrion. This is an uncharacterized protein from Arabidopsis thaliana (Mouse-ear cress).